The chain runs to 92 residues: Small ribosomal subunit protein uS19 (92 aa).

This sequence belongs to the universal ribosomal protein uS19 family.

Protein S19 forms a complex with S13 that binds strongly to the 16S ribosomal RNA. In Bacillus licheniformis (strain ATCC 14580 / DSM 13 / JCM 2505 / CCUG 7422 / NBRC 12200 / NCIMB 9375 / NCTC 10341 / NRRL NRS-1264 / Gibson 46), this protein is Small ribosomal subunit protein uS19.